The chain runs to 394 residues: 3-hydroxybenzoate 6-hydroxylase 1 (394 aa).

Belongs to the 3-hydroxybenzoate 6-hydroxylase family. Homotrimer. It depends on FAD as a cofactor.

The enzyme catalyses 3-hydroxybenzoate + NADH + O2 + H(+) = 2,5-dihydroxybenzoate + NAD(+) + H2O. Its activity is regulated as follows. Inhibited by manganese, copper, mercury, and iron ions. In terms of biological role, catalyzes the NAD- or NADP-dependent conversion of 3-hydroxybenzoate to gentisate. The affinity of the enzyme toward NAD is twice as high as for NADP. The enzyme shows higher specific activities against the intermediates in the degradation of 2,5-xylenol and 3,5-xylenol, 3-hydroxy-4-methylbenzoate and 3-hydroxy-5-methylbenzoate, respectively, than for 3-hydroxybenzoate. It also shows activity against 3-substituted benzoates. The polypeptide is 3-hydroxybenzoate 6-hydroxylase 1 (xlnD) (Aquipseudomonas alcaligenes (Pseudomonas alcaligenes)).